The sequence spans 100 residues: Large ribosomal subunit protein eL30 (100 aa).

It belongs to the eukaryotic ribosomal protein eL30 family.

This Thermococcus sibiricus (strain DSM 12597 / MM 739) protein is Large ribosomal subunit protein eL30.